The chain runs to 255 residues: Large ribosomal subunit protein uL4 (255 aa).

The protein belongs to the universal ribosomal protein uL4 family. As to quaternary structure, part of the 50S ribosomal subunit.

Its function is as follows. One of the primary rRNA binding proteins, this protein initially binds near the 5'-end of the 23S rRNA. It is important during the early stages of 50S assembly. It makes multiple contacts with different domains of the 23S rRNA in the assembled 50S subunit and ribosome. In terms of biological role, forms part of the polypeptide exit tunnel. The chain is Large ribosomal subunit protein uL4 from Pyrococcus horikoshii (strain ATCC 700860 / DSM 12428 / JCM 9974 / NBRC 100139 / OT-3).